The following is a 149-amino-acid chain: SsrA-binding protein (149 aa).

This sequence belongs to the SmpB family.

The protein localises to the cytoplasm. Functionally, required for rescue of stalled ribosomes mediated by trans-translation. Binds to transfer-messenger RNA (tmRNA), required for stable association of tmRNA with ribosomes. tmRNA and SmpB together mimic tRNA shape, replacing the anticodon stem-loop with SmpB. tmRNA is encoded by the ssrA gene; the 2 termini fold to resemble tRNA(Ala) and it encodes a 'tag peptide', a short internal open reading frame. During trans-translation Ala-aminoacylated tmRNA acts like a tRNA, entering the A-site of stalled ribosomes, displacing the stalled mRNA. The ribosome then switches to translate the ORF on the tmRNA; the nascent peptide is terminated with the 'tag peptide' encoded by the tmRNA and targeted for degradation. The ribosome is freed to recommence translation, which seems to be the essential function of trans-translation. The polypeptide is SsrA-binding protein (Wolbachia pipientis wMel).